Reading from the N-terminus, the 852-residue chain is Protein mono-ADP-ribosyltransferase PARP8 (852 aa).

2 disordered regions span residues 113–134 (NGEESRQNSTVEEDSEGDNDSE) and 289–310 (SPSYPPPGCGKSKSKLKPEQDG). The segment covering 123-134 (VEEDSEGDNDSE) has biased composition (acidic residues). Cys332, Cys366, Cys375, and Cys394 each carry ADP-ribosylcysteine. Residues 615–842 (EMTQAPYLEI…QEGGIHKEIL (228 aa)) form the PARP catalytic domain. Positions 748 to 775 (QKVSSKDEPASSSKSSNASQSQKKGQQS) are disordered. Residues 757 to 775 (ASSSKSSNASQSQKKGQQS) show a composition bias toward low complexity.

The protein belongs to the ARTD/PARP family. Post-translationally, auto-mono-ADP-ribosylated.

The enzyme catalyses L-cysteinyl-[protein] + NAD(+) = S-(ADP-D-ribosyl)-L-cysteinyl-[protein] + nicotinamide + H(+). Functionally, mono-ADP-ribosyltransferase that mediates mono-ADP-ribosylation of target proteins. The polypeptide is Protein mono-ADP-ribosyltransferase PARP8 (Mus musculus (Mouse)).